A 1154-amino-acid polypeptide reads, in one-letter code: Voltage-dependent calcium channel subunit alpha-2/delta-2 (1154 aa).

The first 18 residues, 1–18 (MAVPARTCGASWPGPVRT), serve as a signal peptide directing secretion. The segment at 1 to 37 (MAVPARTCGASWPGPVRTARPWPGRGPRPCPDPRGPA) is disordered. At 19–1116 (ARPWPGRGPR…TEDTSDCGRG (1098 aa)) the chain is on the extracellular side. The span at 24 to 34 (GRGPRPCPDPR) shows a compositional bias: pro residues. The N-linked (GlcNAc...) asparagine glycan is linked to Asn205. Residues 294–472 (DMVIIVDVSG…INTQEYLDVL (179 aa)) enclose the VWFA domain. A divalent metal cation is bound by residues Asp300, Ser302, and Ser304. The MIDAS-like motif motif lies at 300–304 (DVSGS). Asn389, Asn421, Asn510, Asn543, Asn627, and Asn864 each carry an N-linked (GlcNAc...) asparagine glycan. Cys446 and Cys1101 form a disulfide bridge. The 90-residue stretch at 488–577 (WTNVYEDALG…KPQTTNFREP (90 aa)) folds into the Cache domain. Residues 1117–1137 (ASFPPSLGVLVSLQLLLLLGL) form a helical membrane-spanning segment. At 1138–1154 (PPRPQPQVHSFAASRHL) the chain is on the cytoplasmic side.

This sequence belongs to the calcium channel subunit alpha-2/delta family. As to quaternary structure, dimer formed of alpha-2-2 and delta-2 chains; disulfide-linked. Voltage-dependent calcium channels are multisubunit complexes, consisting of alpha-1 (CACNA1), alpha-2 (CACNA2D), beta (CACNB) and delta (CACNA2D) subunits in a 1:1:1:1 ratio. N-glycosylated. Post-translationally, may be proteolytically processed into subunits alpha-2-2 and delta-2 that are disulfide-linked. It is however unclear whether such cleavage really takes place in vivo and has a functional role. According to PubMed:11306709, it is processed, at least in vitro, while according to PubMed:17052222, it is only poorly processed in vivo. Predominantly expressed in brain in a restricted pattern. Also expressed at lower level in kidney and testis Not expressed in lung at any moment of development. In brain, it localizes to sections of P21 brain. Expressed at high level in the cerebellum, with moderate levels in medulla, pons, and striatum. Also expressed in cortex, hippocampus, habenula and nucleus reticularis thalami (nRT). Strongly expressed in cerebellar Purkinje cells.

The protein resides in the membrane. Its function is as follows. The alpha-2/delta subunit of voltage-dependent calcium channels regulates calcium current density and activation/inactivation kinetics of the calcium channel. Acts as a regulatory subunit for P/Q-type calcium channel (CACNA1A), N-type (CACNA1B), L-type (CACNA1C OR CACNA1D) and possibly T-type (CACNA1G). This Mus musculus (Mouse) protein is Voltage-dependent calcium channel subunit alpha-2/delta-2 (Cacna2d2).